The chain runs to 165 residues: 3-isopropylmalate dehydratase small subunit (165 aa).

This sequence belongs to the LeuD family. LeuD type 2 subfamily. Heterodimer of LeuC and LeuD.

The enzyme catalyses (2R,3S)-3-isopropylmalate = (2S)-2-isopropylmalate. It functions in the pathway amino-acid biosynthesis; L-leucine biosynthesis; L-leucine from 3-methyl-2-oxobutanoate: step 2/4. Functionally, catalyzes the isomerization between 2-isopropylmalate and 3-isopropylmalate, via the formation of 2-isopropylmaleate. The protein is 3-isopropylmalate dehydratase small subunit of Hydrogenobaculum sp. (strain Y04AAS1).